The sequence spans 150 residues: uncharacterized protein (150 aa).

Belongs to the IIV-6 391R family.

This is an uncharacterized protein from Invertebrate iridescent virus 3 (IIV-3).